The following is a 2835-amino-acid chain: Vanchrobactin synthetase VabF (2835 aa).

The condensation 1 stretch occupies residues 16-452 (EDQWPLIGTQ…IPPSEKQQIT (437 aa)). The interval 473–880 (QQTVESKPNE…GRCDHQIKIR (408 aa)) is adenylation 1. The Carrier 1 domain occupies 988–1062 (APITQPEQLL…MMAGQMVPLQ (75 aa)). Serine 1023 is subject to O-(pantetheine 4'-phosphoryl)serine. Condensation stretches follow at residues 1081–1499 (WFEE…KIQQ) and 1539–1961 (DVLP…EWDL). The interval 1992–2394 (QQQRSPHQLA…GRSDDQIKIR (403 aa)) is adenylation 2. The region spanning 2503–2578 (NAHPGLETQL…KLASLLLDDD (76 aa)) is the Carrier 2 domain. At serine 2538 the chain carries O-(pantetheine 4'-phosphoryl)serine. Positions 2601 to 2821 (ALFCVNSASG…APENVRQIGE (221 aa)) are thioesterase.

It belongs to the NRP synthetase family. Pantetheine 4'-phosphate is required as a cofactor.

It catalyses the reaction holo-[peptidyl-carrier protein] + L-arginine + ATP = L-arginyl-[peptidyl-carrier protein] + AMP + diphosphate. The enzyme catalyses holo-[peptidyl-carrier protein] + L-serine + ATP = L-seryl-[peptidyl-carrier protein] + AMP + diphosphate. The protein operates within siderophore biosynthesis. Functionally, involved in the synthesis of the siderophore vanchrobactin. Probably adenylates L-arginine via its first adenylation domain and loads it onto its first peptidyl carrier domain via a thioester linkage to the phosphopanthetheine moiety. In addition, may adenylate L-serine via its second adenylation domain and loads it onto its second peptidyl carrier domain via a thioester linkage to the phosphopanthetheine moiety. The thioesterase domain may release vanchrobactin after condensation of the siderophore components. The protein is Vanchrobactin synthetase VabF of Vibrio anguillarum (Listonella anguillarum).